Consider the following 100-residue polypeptide: MALDRGTLTRADLSEEVHREIGLSRADSAAVVEQVLEHMCLALARGENVKISGFGSFILREKGQRIGRNPKTGVEVPIAPRRVLTFRASQMLRDRIVSGN.

The protein belongs to the bacterial histone-like protein family. Heterodimer of an alpha and a beta chain.

Its function is as follows. This protein is one of the two subunits of integration host factor, a specific DNA-binding protein that functions in genetic recombination as well as in transcriptional and translational control. The chain is Integration host factor subunit alpha from Rhizorhabdus wittichii (strain DSM 6014 / CCUG 31198 / JCM 15750 / NBRC 105917 / EY 4224 / RW1) (Sphingomonas wittichii).